Reading from the N-terminus, the 390-residue chain is Transforming protein cbl (390 aa).

Residues 1–52 (ASAGGGCRRGPSFSPGSIPSLAAERAPDPPLAMAGNVKKSSGAGGGGSGGSG) form a disordered region. Residues 42–52 (GAGGGGSGGSG) show a composition bias toward gly residues. A 4H region spans residues 77-205 (PPCTVDKKMV…KGIFPSGLFQ (129 aa)). The region spanning 77-381 (PPCTVDKKMV…GRNQNPDLTG (305 aa)) is the Cbl-PTB domain. The EF-hand-like stretch occupies residues 206-278 (GDTFRITKAD…FEFDIFTRLF (73 aa)). Asp259, Thr261, Asn263, Tyr265, and Glu270 together coordinate Ca(2+). Residues 279-381 (QPWSSLLRNW…GRNQNPDLTG (103 aa)) are SH2-like. Arg324 contacts 4-O-phospho-L-tyrosine.

Its function is as follows. Induces early B-lineage lymphomas. This is Transforming protein cbl (V-CBL) from Mus musculus (Mouse).